A 314-amino-acid polypeptide reads, in one-letter code: Melanoma-associated antigen 2 (314 aa).

A compositionally biased stretch (basic and acidic residues) spans 1-20 (MPLEQRSQHCKPEEGLEARG). The tract at residues 1–69 (MPLEQRSQHC…SPPHSPQGAS (69 aa)) is disordered. A compositionally biased stretch (low complexity) spans 21–44 (EALGLVGAQAPATEEQQTASSSST). A Phosphoserine modification is found at serine 64. The region spanning 109–308 (ISRKMVELVH…ISYPPLHERA (200 aa)) is the MAGE domain.

As to quaternary structure, interacts with TRIM28 and UBE2H. Interacts with HDAC3. Interacts with PML (isoform PML-1, isoform PML-2, isoform PML-3, isoform PML-4 and isoform PML-5). In terms of tissue distribution, expressed in many tumors of several types, such as melanoma, head and neck squamous cell carcinoma, lung carcinoma and breast carcinoma, but not in normal tissues except for testes.

The protein localises to the nucleus. It localises to the PML body. Reduces p53/TP53 transactivation function through recruitment of HDAC3 to p53/TP53 transcription sites. Also represses p73/TP73 activity. Proposed to enhance ubiquitin ligase activity of RING-type zinc finger-containing E3 ubiquitin-protein ligases. In vitro enhances ubiquitin ligase activity of TRIM28 and stimulates p53/TP53 ubiquitination by TRIM28 potentially in presence of Ubl-conjugating enzyme UBE2H. Proposed to act through recruitment and/or stabilization of the Ubl-conjugating enzyme (E2) at the E3:substrate complex. May play a role in embryonal development and tumor transformation or aspects of tumor progression. In vitro promotes cell viability in melanoma cell lines. Antigen recognized on a melanoma by autologous cytolytic T-lymphocytes. Negatively regulates acetylation and sumoylation of PML and represses PML-induced p53/TP53 acetylation and activation. The protein is Melanoma-associated antigen 2 (MAGEA2) of Homo sapiens (Human).